Consider the following 182-residue polypeptide: Large ribosomal subunit protein uL5 (182 aa).

Belongs to the universal ribosomal protein uL5 family. Part of the 50S ribosomal subunit; part of the 5S rRNA/L5/L18/L25 subcomplex. Contacts the 5S rRNA and the P site tRNA. Forms a bridge to the 30S subunit in the 70S ribosome.

Functionally, this is one of the proteins that bind and probably mediate the attachment of the 5S RNA into the large ribosomal subunit, where it forms part of the central protuberance. In the 70S ribosome it contacts protein S13 of the 30S subunit (bridge B1b), connecting the 2 subunits; this bridge is implicated in subunit movement. Contacts the P site tRNA; the 5S rRNA and some of its associated proteins might help stabilize positioning of ribosome-bound tRNAs. The protein is Large ribosomal subunit protein uL5 of Thermus thermophilus (strain ATCC BAA-163 / DSM 7039 / HB27).